Reading from the N-terminus, the 1394-residue chain is DNA-directed RNA polymerase subunit beta' (1394 aa).

Positions 71, 73, 86, and 89 each coordinate Zn(2+). Residues D462, D464, and D466 each coordinate Mg(2+). Residues C810, C884, C891, and C894 each coordinate Zn(2+).

This sequence belongs to the RNA polymerase beta' chain family. As to quaternary structure, the RNAP catalytic core consists of 2 alpha, 1 beta, 1 beta' and 1 omega subunit. When a sigma factor is associated with the core the holoenzyme is formed, which can initiate transcription. Requires Mg(2+) as cofactor. The cofactor is Zn(2+).

The catalysed reaction is RNA(n) + a ribonucleoside 5'-triphosphate = RNA(n+1) + diphosphate. DNA-dependent RNA polymerase catalyzes the transcription of DNA into RNA using the four ribonucleoside triphosphates as substrates. This is DNA-directed RNA polymerase subunit beta' from Caulobacter sp. (strain K31).